We begin with the raw amino-acid sequence, 300 residues long: Protoheme IX farnesyltransferase 1 (300 aa).

8 helical membrane-spanning segments follow: residues 26–46 (VVVL…RAGV), 48–68 (WTVL…AAAV), 97–117 (AALA…LTFT), 120–140 (LTAW…TGFL), 148–168 (IVIG…AATG), 174–194 (PLLL…ALAI), 226–246 (FALL…VLYL), and 280–300 (IYYL…LLNL).

The protein belongs to the UbiA prenyltransferase family. Protoheme IX farnesyltransferase subfamily.

It is found in the cell inner membrane. It carries out the reaction heme b + (2E,6E)-farnesyl diphosphate + H2O = Fe(II)-heme o + diphosphate. It participates in porphyrin-containing compound metabolism; heme O biosynthesis; heme O from protoheme: step 1/1. Converts heme B (protoheme IX) to heme O by substitution of the vinyl group on carbon 2 of heme B porphyrin ring with a hydroxyethyl farnesyl side group. The sequence is that of Protoheme IX farnesyltransferase 1 from Pseudomonas fluorescens (strain ATCC BAA-477 / NRRL B-23932 / Pf-5).